A 352-amino-acid chain; its full sequence is Phosphoribosylformylglycinamidine cyclo-ligase (352 aa).

Belongs to the AIR synthase family.

It localises to the cytoplasm. The catalysed reaction is 2-formamido-N(1)-(5-O-phospho-beta-D-ribosyl)acetamidine + ATP = 5-amino-1-(5-phospho-beta-D-ribosyl)imidazole + ADP + phosphate + H(+). Its pathway is purine metabolism; IMP biosynthesis via de novo pathway; 5-amino-1-(5-phospho-D-ribosyl)imidazole from N(2)-formyl-N(1)-(5-phospho-D-ribosyl)glycinamide: step 2/2. In Azoarcus sp. (strain BH72), this protein is Phosphoribosylformylglycinamidine cyclo-ligase.